Consider the following 434-residue polypeptide: Homogentisate 1,2-dioxygenase (434 aa).

The active-site Proton acceptor is His-289. Residues His-332 and Glu-338 each contribute to the Fe cation site. Homogentisate-binding residues include Tyr-347 and His-368. Fe cation is bound at residue His-368.

Belongs to the homogentisate dioxygenase family. As to quaternary structure, hexamer; dimer of trimers. Fe cation is required as a cofactor.

The catalysed reaction is homogentisate + O2 = 4-maleylacetoacetate + H(+). Its pathway is amino-acid degradation; L-phenylalanine degradation; acetoacetate and fumarate from L-phenylalanine: step 4/6. Its function is as follows. Involved in the catabolism of homogentisate (2,5-dihydroxyphenylacetate or 2,5-OH-PhAc), a central intermediate in the degradation of phenylalanine and tyrosine. Catalyzes the oxidative ring cleavage of the aromatic ring of homogentisate to yield maleylacetoacetate. The chain is Homogentisate 1,2-dioxygenase from Pseudomonas syringae pv. tomato (strain ATCC BAA-871 / DC3000).